Consider the following 516-residue polypeptide: MEVFILELVLGSKNITLEDLINVTRKGYKVSISEEAYEKIDKARALVDKYVEEGKVSYGITTGFGKFAEVSISKEQTGQLQKNIVMSHSCNVGNPLPIDIAKGIVLLRAVNLAKGYSGARRIVIEKLVELLNKDVTPWIPEKGSVGSSGDLSPLAHMSLVLIGLGKAYYKGELLEAKDALAKADIEPIPALSSKEGLALTNGTQALTSTGAHVLYDAINLSKHLDIAASLTMEGLHGIIDAYDPRIGEVRGHLGQINTAKNMRNILAGSKNVTKQGVERVQDSYVLRCIPQIHGASKDTLEYVKQKVELELNAVTDNPIIFVDTDEVISGGNFHGQPMALPFDFLGIALSEMANVSERRIEKMVNPAINNGLPAFLVEKGGLNSGFMIVQYSAASLVSENKVLAHPASVDSIPTSANQEDHVSMGSVAAKKSKDIFENVRKVIGMELITACQAIDLKEAKDKLSPATKVAYDEVRKIISYVSEDRPMYIDIHAAEDLIKTNKIVENVEKAIGKLEF.

Positions 147–149 (SSG) form a cross-link, 5-imidazolinone (Ser-Gly). Position 148 is a 2,3-didehydroalanine (Ser) (Ser-148).

It belongs to the PAL/histidase family. In terms of processing, contains an active site 4-methylidene-imidazol-5-one (MIO), which is formed autocatalytically by cyclization and dehydration of residues Ser-Ser-Gly.

The protein resides in the cytoplasm. The enzyme catalyses L-histidine = trans-urocanate + NH4(+). Its pathway is amino-acid degradation; L-histidine degradation into L-glutamate; N-formimidoyl-L-glutamate from L-histidine: step 1/3. This is Histidine ammonia-lyase 1 (hutH1) from Fusobacterium nucleatum subsp. nucleatum (strain ATCC 25586 / DSM 15643 / BCRC 10681 / CIP 101130 / JCM 8532 / KCTC 2640 / LMG 13131 / VPI 4355).